The sequence spans 620 residues: Glutathione-regulated potassium-efflux system protein KefC (620 aa).

The next 12 membrane-spanning stretches (helical) occupy residues 4–24 (HTLI…PIAV), 26–46 (LGLG…PWGL), 54–74 (SILH…GLEL), 90–110 (GALQ…FLGL), 114–134 (VAEL…MQAM), 149–169 (FAVL…IPLL), 178–198 (MGAF…VVLL), 218–238 (VFSA…EEVG), 270–290 (GLLL…GTLL), 294–314 (LRIV…LWLI), 327–347 (WFAV…GAAQ), and 359–379 (SLTL…VILN). Positions 399–518 (QPRVIIAGFG…AGVEKPERET (120 aa)) constitute an RCK N-terminal domain. The interval 597-620 (GWQGTEEGKHTGNMADEPETKPSS) is disordered.

The protein belongs to the monovalent cation:proton antiporter 2 (CPA2) transporter (TC 2.A.37) family. KefC subfamily. In terms of assembly, homodimer. Interacts with the regulatory subunit KefF.

Its subcellular location is the cell inner membrane. Pore-forming subunit of a potassium efflux system that confers protection against electrophiles. Catalyzes K(+)/H(+) antiport. This Escherichia fergusonii (strain ATCC 35469 / DSM 13698 / CCUG 18766 / IAM 14443 / JCM 21226 / LMG 7866 / NBRC 102419 / NCTC 12128 / CDC 0568-73) protein is Glutathione-regulated potassium-efflux system protein KefC.